Reading from the N-terminus, the 215-residue chain is MDLYNMSGSPSTRAVMMTAKAVGVEFNSIQVNTFVGEQLEPWFVKINPQHTIPTLVDNLFVIWETRAIVVYLVEQYGKDDSLYPKDPQKQALINQRLYFDMGTLYDGIAKYFFPLLRTGKPGTQENLEKLNAAFDLLNNFLDGQDYVAGNQLSVADIVILATVSTTEMVDFDLKKFPNVDRWYKNAQKVTPGWDENLARIQSAKKFLAENLIEKL.

In terms of domain architecture, GST N-terminal spans M1–D80. Residues S9, H50–I52, and E64–R66 contribute to the glutathione site. The GST C-terminal domain maps to D86–F206.

Belongs to the GST superfamily. Delta family. In terms of assembly, homodimer.

The enzyme catalyses RX + glutathione = an S-substituted glutathione + a halide anion + H(+). Functionally, conjugation of reduced glutathione to a wide number of exogenous and endogenous hydrophobic electrophiles. May be involved in detoxification. The protein is Glutathione S-transferase D6 of Drosophila melanogaster (Fruit fly).